The sequence spans 550 residues: 2-succinyl-5-enolpyruvyl-6-hydroxy-3-cyclohexene-1-carboxylate synthase (550 aa).

This sequence belongs to the TPP enzyme family. MenD subfamily. Homodimer. Mg(2+) is required as a cofactor. The cofactor is Mn(2+). Requires thiamine diphosphate as cofactor.

The catalysed reaction is isochorismate + 2-oxoglutarate + H(+) = 5-enolpyruvoyl-6-hydroxy-2-succinyl-cyclohex-3-ene-1-carboxylate + CO2. It participates in quinol/quinone metabolism; 1,4-dihydroxy-2-naphthoate biosynthesis; 1,4-dihydroxy-2-naphthoate from chorismate: step 2/7. Its pathway is quinol/quinone metabolism; menaquinone biosynthesis. In terms of biological role, catalyzes the thiamine diphosphate-dependent decarboxylation of 2-oxoglutarate and the subsequent addition of the resulting succinic semialdehyde-thiamine pyrophosphate anion to isochorismate to yield 2-succinyl-5-enolpyruvyl-6-hydroxy-3-cyclohexene-1-carboxylate (SEPHCHC). In Desulfitobacterium hafniense (strain DSM 10664 / DCB-2), this protein is 2-succinyl-5-enolpyruvyl-6-hydroxy-3-cyclohexene-1-carboxylate synthase.